A 675-amino-acid chain; its full sequence is Zinc finger protein 526 (675 aa).

3 C2H2-type zinc fingers span residues 56-78 (FMCS…QEQH), 108-130 (FQCG…QDAH), and 140-163 (YQCG…KTQH). Residues 160–195 (KTQHLSSAADEPPSPLPPPTPPPPPPPPPPPPPPEV) are disordered. The segment covering 171-194 (PPSPLPPPTPPPPPPPPPPPPPPE) has biased composition (pro residues). The C2H2-type 4 zinc-finger motif lies at 200-222 (YECPECSTLCATPEEFLEHQGTH). The span at 225-234 (SLEKEEHNGL) shows a compositional bias: basic and acidic residues. The tract at residues 225–283 (SLEKEEHNGLEEEEEDEEEGEEEEDDDDEETDEEEASSELTADDTGSNKSTADSAQSCG) is disordered. Residues 235 to 261 (EEEEEDEEEGEEEEDDDDEETDEEEAS) are compositionally biased toward acidic residues. Polar residues predominate over residues 269–281 (TGSNKSTADSAQS). 4 C2H2-type zinc fingers span residues 312–334 (FHCS…GRAH), 339–361 (HECT…QRLH), 367–389 (YLCV…RRAH), and 395–416 (HRCR…RRTH). A disordered region spans residues 415 to 439 (THTGKSGTPTRVATVSPAPAEPTPP). Residues 418-427 (GKSGTPTRVA) are compositionally biased toward polar residues. C2H2-type zinc fingers lie at residues 447–470 (LPCP…RAVH), 477–499 (HRCG…LRTH), 505–527 (FQCH…QLTH), 533–555 (YQCL…RRLH), and 578–600 (YYCG…QRVH). The tract at residues 606 to 625 (LTLQPPRSPSPVPPPPPEPQ) is disordered. The span at 611 to 624 (PRSPSPVPPPPPEP) shows a compositional bias: pro residues.

It belongs to the krueppel C2H2-type zinc-finger protein family.

It is found in the nucleus. Functionally, may be involved in transcriptional regulation. This Mus musculus (Mouse) protein is Zinc finger protein 526 (Znf526).